Reading from the N-terminus, the 429-residue chain is GTPase Obg (429 aa).

An Obg domain is found at 1–158; the sequence is MFVDQVKIYV…RNVQLELKVL (158 aa). The segment at 124 to 145 is disordered; the sequence is RGNKRFATPANPAPELSENGEP. In terms of domain architecture, OBG-type G spans 159–329; that stretch reads ADVGLVGFPS…LLLAIADKLE (171 aa). GTP contacts are provided by residues 165 to 172, 190 to 194, 212 to 215, 282 to 285, and 310 to 312; these read GFPSVGKS, FTTIV, DLPG, NKMD, and SAV. Mg(2+) contacts are provided by S172 and T192. The OCT domain occupies 351-429; that stretch reads KYVADEPDFE…LLDYEFEFMD (79 aa).

It belongs to the TRAFAC class OBG-HflX-like GTPase superfamily. OBG GTPase family. As to quaternary structure, monomer. Mg(2+) serves as cofactor.

The protein localises to the cytoplasm. An essential GTPase which binds GTP, GDP and possibly (p)ppGpp with moderate affinity, with high nucleotide exchange rates and a fairly low GTP hydrolysis rate. Plays a role in control of the cell cycle, stress response, ribosome biogenesis and in those bacteria that undergo differentiation, in morphogenesis control. The sequence is that of GTPase Obg from Listeria monocytogenes serotype 4a (strain HCC23).